The chain runs to 85 residues: UPF0291 protein SAK_0343 (85 aa).

The tract at residues 58–85 is disordered; sequence GNDVTPEKLRQVQREKGLHGRSLDDPNS. Positions 62 to 85 are enriched in basic and acidic residues; sequence TPEKLRQVQREKGLHGRSLDDPNS.

The protein belongs to the UPF0291 family.

The protein localises to the cytoplasm. This chain is UPF0291 protein SAK_0343, found in Streptococcus agalactiae serotype Ia (strain ATCC 27591 / A909 / CDC SS700).